Consider the following 142-residue polypeptide: Small ribosomal subunit protein bS6 (142 aa).

Over residues 110 to 133 (NKKPSHAKEKHEKTEHTHSHHTEE) the composition is skewed to basic and acidic residues. The tract at residues 110-142 (NKKPSHAKEKHEKTEHTHSHHTEEAESVGSHSE) is disordered.

Belongs to the bacterial ribosomal protein bS6 family.

Its function is as follows. Binds together with bS18 to 16S ribosomal RNA. The polypeptide is Small ribosomal subunit protein bS6 (rpsF) (Helicobacter pylori (strain ATCC 700392 / 26695) (Campylobacter pylori)).